Here is a 491-residue protein sequence, read N- to C-terminus: Allene oxide synthase 3 (491 aa).

Heme b is bound by residues lysine 104, histidine 135, and lysine 139. The (13S)-hydroperoxy-(9Z,11E)-octadecadienoate site is built by asparagine 296 and lysine 302. Asparagine 296 lines the (13S)-hydroperoxy-(9Z,11E,15Z)-octadecatrienoate pocket. Residues lysine 442 and cysteine 444 each contribute to the heme b site.

This sequence belongs to the cytochrome P450 family. The cofactor is heme b. Expressed in roots. Not detected in aerial tissues, including cotyledons, leaves, stems and flower buds.

It carries out the reaction (13S)-hydroperoxy-(9Z,11E,15Z)-octadecatrienoate = (9Z,13S,15Z)-12,13-epoxyoctadeca-9,11,15-trienoate + H2O. It catalyses the reaction (13S)-hydroperoxy-(9Z,11E)-octadecadienoate = (9Z,13S)-12,13-epoxyoctadeca-9,11-dienoate + H2O. The enzyme catalyses (9Z,13S,15Z)-12,13-epoxyoctadeca-9,11,15-trienoate = (9S,13S,15Z)-12-oxophyto-10,15-dienoate. Its function is as follows. Cytochrome P450 metabolizing both 13- and 9-hydroperoxides of linoleic and linolenic acids, but with a marked preference for 9-hydroperoxy fatty acids. Catalyzes not only the synthesis of allene oxide, but also its hydrolysis and cyclization. The first step is the synthesis of (12Z)-9,10-epoxyoctadeca-10,12-dienoic acid (9,10-EOD) and the final products are (9R)-alpha-ketol and the racemic cis-10-oxo-11-phytoenoic acid. The cyclase activity possesses regiospecificity and (9Z)-12,13-epoxyoctadeca-9,11-dienoic acid (12,13-EOD) is significantly less efficient as a substrate for cyclopentenone production than 9,10-EOD. Has no hydroperoxide lyase activity. May play a defensive role against soil-borne pests that affect roots or juvenile tissues as they emerge from the germinating seed. In Solanum lycopersicum (Tomato), this protein is Allene oxide synthase 3.